The primary structure comprises 447 residues: Serine/threonine-protein phosphatase 2A 55 kDa regulatory subunit B gamma isoform (447 aa).

WD repeat units follow at residues 22–61, 87–128, 171–209, 220–260, 279–317, 334–375, and 410–446; these read TEAD…KNAP, EIEE…KRPE, GHTY…RSFN, DLTE…LCDK, EIIS…RPIE, ESDC…DVTL, and DFTK…NSDM.

Belongs to the phosphatase 2A regulatory subunit B family. PP2A consists of a common heterodimeric core enzyme, composed of a 36 kDa catalytic subunit (subunit C) and a 65 kDa constant regulatory subunit (PR65 or subunit A), that associates with a variety of regulatory subunits. Proteins that associate with the core dimer include three families of regulatory subunits B (the R2/B/PR55/B55, R3/B''/PR72/PR130/PR59 and R5/B'/B56 families), the 48 kDa variable regulatory subunit, viral proteins, and cell signaling molecules. Interacts with IER5. In terms of tissue distribution, highly expressed in brain.

Functionally, the B regulatory subunit might modulate substrate selectivity and catalytic activity, and might also direct the localization of the catalytic enzyme to a particular subcellular compartment. In Rattus norvegicus (Rat), this protein is Serine/threonine-protein phosphatase 2A 55 kDa regulatory subunit B gamma isoform (Ppp2r2c).